The sequence spans 404 residues: cAMP-dependent protein kinase regulatory subunit (404 aa).

A dimerization and phosphorylation region spans residues Leu-14–Phe-144. Ser-105 bears the Phosphoserine mark. Residues Leu-145–Pro-276, Glu-223, Arg-232, Cys-277–Glu-398, Glu-344, and Arg-353 each bind 3',5'-cyclic AMP.

The protein belongs to the cAMP-dependent kinase regulatory chain family. In terms of assembly, tetramer, composed of 2 regulatory (R) and 2 catalytic (C) subunits. In the presence of cAMP it dissociates into 2 active monomeric C subunits and an R dimer.

In terms of biological role, cAMP-dependent protein kinase PKA regulatory subunit. The chain is cAMP-dependent protein kinase regulatory subunit (PKAR) from Colletotrichum trifolii.